A 331-amino-acid chain; its full sequence is DSC E3 ubiquitin ligase complex subunit D (331 aa).

A glycan (N-linked (GlcNAc...) asparagine) is linked at N26. Helical transmembrane passes span 63 to 83 (ILIY…ILFA), 107 to 127 (PFIG…NFFT), and 159 to 179 (LFLL…LIVE). The disordered stretch occupies residues 188-225 (STTSTEILRVQDHDSEERGVHRTRPESRSSVVGAELDE). Positions 196-214 (RVQDHDSEERGVHRTRPES) are enriched in basic and acidic residues.

In terms of assembly, component of the DSC E3 ubiquitin ligase complex composed of dscA, dscB, dscC and dscD.

It localises to the endoplasmic reticulum membrane. The protein operates within protein modification; protein ubiquitination. Component of the DSC E3 ubiquitin ligase complex which is required for the srbA transcriptional activator proteolytic cleavage to release the soluble transcription factor from the membrane in low oxygen or sterol conditions. Required for growth during hypoxia and triazole drug susceptibility, as well as for virulence in a murine model of invasive pulmonary aspergillosis (IPA). The polypeptide is DSC E3 ubiquitin ligase complex subunit D (Aspergillus fumigatus (strain ATCC MYA-4609 / CBS 101355 / FGSC A1100 / Af293) (Neosartorya fumigata)).